The following is a 155-amino-acid chain: 17.6 kDa class II heat shock protein (155 aa).

One can recognise a sHSP domain in the interval 38 to 155 (DAKAMAATPA…KPKTIQVQVA (118 aa)).

It belongs to the small heat shock protein (HSP20) family. In terms of assembly, may form oligomeric structures.

It is found in the cytoplasm. The polypeptide is 17.6 kDa class II heat shock protein (HSP17.6) (Arabidopsis thaliana (Mouse-ear cress)).